The primary structure comprises 92 residues: UPF0235 protein CCA_00247 (92 aa).

Belongs to the UPF0235 family.

This is UPF0235 protein CCA_00247 from Chlamydia caviae (strain ATCC VR-813 / DSM 19441 / 03DC25 / GPIC) (Chlamydophila caviae).